A 35-amino-acid polypeptide reads, in one-letter code: Cupiennin-1b (35 aa).

Position 35 is a glutamic acid 1-amide (glutamate 35).

Belongs to the cationic peptide 04 (cupiennin) family. 01 subfamily. In terms of tissue distribution, expressed by the venom gland.

The protein resides in the secreted. Has antimicrobial activity against E.coli, E.faecalis, P.aeruginosa, and S.aureus. Has insecticidal and hemolytic activities. Probably acts by disturbing membrane function with its amphipathic structure. The sequence is that of Cupiennin-1b from Cupiennius salei (American wandering spider).